Here is a 199-residue protein sequence, read N- to C-terminus: uncharacterized protein (199 aa).

Positions 72–116 form a coiled coil; it reads EIYSEIENEESDIEEMSEEMKAFFAKTQEHRQKLKEQRAAEKRKE. Basic and acidic residues predominate over residues 98 to 117; sequence TQEHRQKLKEQRAAEKRKEG. Residues 98–127 are disordered; sequence TQEHRQKLKEQRAAEKRKEGQSSSKSQEEY.

This is an uncharacterized protein from Caenorhabditis elegans.